We begin with the raw amino-acid sequence, 447 residues long: ATP-dependent protease ATPase subunit HslU (447 aa).

ATP is bound by residues I17, 59-64 (GVGKTE), D256, E321, and R393.

It belongs to the ClpX chaperone family. HslU subfamily. As to quaternary structure, a double ring-shaped homohexamer of HslV is capped on each side by a ring-shaped HslU homohexamer. The assembly of the HslU/HslV complex is dependent on binding of ATP.

The protein resides in the cytoplasm. Its function is as follows. ATPase subunit of a proteasome-like degradation complex; this subunit has chaperone activity. The binding of ATP and its subsequent hydrolysis by HslU are essential for unfolding of protein substrates subsequently hydrolyzed by HslV. HslU recognizes the N-terminal part of its protein substrates and unfolds these before they are guided to HslV for hydrolysis. The sequence is that of ATP-dependent protease ATPase subunit HslU from Pseudomonas putida (strain W619).